A 250-amino-acid polypeptide reads, in one-letter code: Probable xyloglucan-specific endo-beta-1,4-glucanase A (250 aa).

Residues 1-19 (MKLSVLSLASLASAAALNA) form the signal peptide. N72 carries N-linked (GlcNAc...) asparagine glycosylation.

This sequence belongs to the glycosyl hydrolase 12 (cellulase H) family.

It localises to the secreted. The enzyme catalyses xyloglucan + H2O = xyloglucan oligosaccharides.. In terms of biological role, catalyzes endohydrolysis of 1,4-beta-D-glucosidic linkages in xyloglucan with retention of the beta-configuration of the glycosyl residues. Specific for xyloglucan and does not hydrolyze other cell wall components. The chain is Probable xyloglucan-specific endo-beta-1,4-glucanase A (xgeA) from Aspergillus terreus (strain NIH 2624 / FGSC A1156).